Here is a 152-residue protein sequence, read N- to C-terminus: UPF0225 protein YchJ (152 aa).

This sequence belongs to the UPF0225 family.

This is UPF0225 protein YchJ from Escherichia coli O6:K15:H31 (strain 536 / UPEC).